A 421-amino-acid polypeptide reads, in one-letter code: Histidine--tRNA ligase (421 aa).

It belongs to the class-II aminoacyl-tRNA synthetase family.

The protein resides in the cytoplasm. The catalysed reaction is tRNA(His) + L-histidine + ATP = L-histidyl-tRNA(His) + AMP + diphosphate + H(+). This is Histidine--tRNA ligase from Pyrobaculum islandicum (strain DSM 4184 / JCM 9189 / GEO3).